The sequence spans 533 residues: Putative amidase C550.07 (533 aa).

Residues Lys132 and Ser207 each act as charge relay system in the active site. The active-site Acyl-ester intermediate is Ser231.

It belongs to the amidase family.

Its subcellular location is the cytoplasm. It localises to the nucleus. It catalyses the reaction a monocarboxylic acid amide + H2O = a monocarboxylate + NH4(+). In Schizosaccharomyces pombe (strain 972 / ATCC 24843) (Fission yeast), this protein is Putative amidase C550.07.